A 223-amino-acid chain; its full sequence is Ubiquitin carboxyl-terminal hydrolase isozyme L1 (223 aa).

The residue at position 1 (M1) is an N-acetylmethionine. Positions 2–221 (QLKPMEINPE…VRFSAVALCK (220 aa)) constitute a UCH catalytic domain. An interaction with ubiquitin region spans residues 5–10 (PMEINP). C90 (nucleophile) is an active-site residue. Residue S125 is modified to Phosphoserine. The Proton donor role is filled by H161. Residues 211–216 (EVRFSA) are interaction with ubiquitin. Residue C220 is the site of S-farnesyl cysteine attachment. Residues 221 to 223 (KAA) constitute a propeptide, removed in mature form.

It belongs to the peptidase C12 family. Monomer. Homodimer. Interacts with SNCA. Interacts with COPS5. O-glycosylated. Found in neuronal cell bodies and processes throughout the neocortex (at protein level). Expressed in neurons and cells of the diffuse neuroendocrine system and their tumors. Weakly expressed in ovary. Down-regulated in brains from Parkinson disease and Alzheimer disease patients.

The protein resides in the cytoplasm. The protein localises to the endoplasmic reticulum membrane. The catalysed reaction is Thiol-dependent hydrolysis of ester, thioester, amide, peptide and isopeptide bonds formed by the C-terminal Gly of ubiquitin (a 76-residue protein attached to proteins as an intracellular targeting signal).. Functionally, deubiquitinase that plays a role in the regulation of several processes such as maintenance of synaptic function, cardiac function, inflammatory response or osteoclastogenesis. Abrogates the ubiquitination of multiple proteins including WWTR1/TAZ, EGFR, HIF1A and beta-site amyloid precursor protein cleaving enzyme 1/BACE1. In addition, recognizes and hydrolyzes a peptide bond at the C-terminal glycine of ubiquitin to maintain a stable pool of monoubiquitin that is a key requirement for the ubiquitin-proteasome and the autophagy-lysosome pathways. Regulates amyloid precursor protein/APP processing by promoting BACE1 degradation resulting in decreased amyloid beta production. Plays a role in the immune response by regulating the ability of MHC I molecules to reach cross-presentation compartments competent for generating Ag-MHC I complexes. Mediates the 'Lys-48'-linked deubiquitination of the transcriptional coactivator WWTR1/TAZ leading to its stabilization and inhibition of osteoclastogenesis. Deubiquitinates and stabilizes epidermal growth factor receptor EGFR to prevent its degradation and to activate its downstream mediators. Modulates oxidative activity in skeletal muscle by regulating key mitochondrial oxidative proteins. Enhances the activity of hypoxia-inducible factor 1-alpha/HIF1A by abrogateing its VHL E3 ligase-mediated ubiquitination and consequently inhibiting its degradation. This chain is Ubiquitin carboxyl-terminal hydrolase isozyme L1 (UCHL1), found in Homo sapiens (Human).